The chain runs to 196 residues: Molybdenum cofactor guanylyltransferase (196 aa).

GTP-binding positions include 12–14, K25, N53, D71, and D101; that span reads LAG. D101 contributes to the Mg(2+) binding site.

This sequence belongs to the MobA family. As to quaternary structure, monomer. It depends on Mg(2+) as a cofactor.

The protein resides in the cytoplasm. The enzyme catalyses Mo-molybdopterin + GTP + H(+) = Mo-molybdopterin guanine dinucleotide + diphosphate. In terms of biological role, transfers a GMP moiety from GTP to Mo-molybdopterin (Mo-MPT) cofactor (Moco or molybdenum cofactor) to form Mo-molybdopterin guanine dinucleotide (Mo-MGD) cofactor. This is Molybdenum cofactor guanylyltransferase from Bordetella petrii (strain ATCC BAA-461 / DSM 12804 / CCUG 43448).